Reading from the N-terminus, the 860-residue chain is Leucine--tRNA ligase (860 aa).

The 'HIGH' region signature appears at 42 to 52 (PYPSGRLHMGH). A 'KMSKS' region motif is present at residues 619–623 (KMSKS). Lys622 is a binding site for ATP.

The protein belongs to the class-I aminoacyl-tRNA synthetase family.

It is found in the cytoplasm. The enzyme catalyses tRNA(Leu) + L-leucine + ATP = L-leucyl-tRNA(Leu) + AMP + diphosphate. The chain is Leucine--tRNA ligase from Shigella boydii serotype 18 (strain CDC 3083-94 / BS512).